The sequence spans 159 residues: Putative ribosomal RNA large subunit methyltransferase H (159 aa).

Residues leucine 76, glycine 108, and 127-132 (FSKMTF) each bind S-adenosyl-L-methionine.

The protein belongs to the RNA methyltransferase RlmH family.

It localises to the cytoplasm. The enzyme catalyses pseudouridine(1915) in 23S rRNA + S-adenosyl-L-methionine = N(3)-methylpseudouridine(1915) in 23S rRNA + S-adenosyl-L-homocysteine + H(+). Functionally, specifically methylates the pseudouridine at position 1915 (m3Psi1915) in 23S rRNA. The sequence is that of Putative ribosomal RNA large subunit methyltransferase H from Methanococcus maripaludis (strain DSM 14266 / JCM 13030 / NBRC 101832 / S2 / LL).